The primary structure comprises 51 residues: Sec-independent protein translocase protein TatA (51 aa).

Residues 1–21 (MGMSFSHLLIILLIIFVLFGA) form a helical membrane-spanning segment.

It belongs to the TatA/E family. The Tat system comprises two distinct complexes: a TatABC complex, containing multiple copies of TatA, TatB and TatC subunits, and a separate TatA complex, containing only TatA subunits. Substrates initially bind to the TatABC complex, which probably triggers association of the separate TatA complex to form the active translocon.

The protein resides in the cell inner membrane. Its function is as follows. Part of the twin-arginine translocation (Tat) system that transports large folded proteins containing a characteristic twin-arginine motif in their signal peptide across membranes. TatA could form the protein-conducting channel of the Tat system. In Rickettsia bellii (strain RML369-C), this protein is Sec-independent protein translocase protein TatA.